A 152-amino-acid polypeptide reads, in one-letter code: Ribosome maturation factor RimP (152 aa).

The protein belongs to the RimP family.

It is found in the cytoplasm. Functionally, required for maturation of 30S ribosomal subunits. The protein is Ribosome maturation factor RimP of Clostridium beijerinckii (strain ATCC 51743 / NCIMB 8052) (Clostridium acetobutylicum).